Here is a 203-residue protein sequence, read N- to C-terminus: ATP-dependent Clp protease proteolytic subunit (203 aa).

The active-site Nucleophile is the serine 101. Residue histidine 126 is part of the active site.

The protein belongs to the peptidase S14 family. As to quaternary structure, component of the chloroplastic Clp protease core complex.

It is found in the plastid. The protein resides in the chloroplast stroma. The catalysed reaction is Hydrolysis of proteins to small peptides in the presence of ATP and magnesium. alpha-casein is the usual test substrate. In the absence of ATP, only oligopeptides shorter than five residues are hydrolyzed (such as succinyl-Leu-Tyr-|-NHMec, and Leu-Tyr-Leu-|-Tyr-Trp, in which cleavage of the -Tyr-|-Leu- and -Tyr-|-Trp bonds also occurs).. In terms of biological role, cleaves peptides in various proteins in a process that requires ATP hydrolysis. Has a chymotrypsin-like activity. Plays a major role in the degradation of misfolded proteins. This is ATP-dependent Clp protease proteolytic subunit from Marchantia polymorpha (Common liverwort).